We begin with the raw amino-acid sequence, 293 residues long: ELMO domain-containing protein 2 (293 aa).

An ELMO domain is found at 126 to 282 (QHEKLLIKLW…KFHEKIKGLL (157 aa)).

Functionally, acts as a GTPase-activating protein (GAP) toward guanine nucleotide exchange factors like ARL2, ARL3, ARF1 and ARF6, but not for GTPases outside the Arf family. This is ELMO domain-containing protein 2 (ELMOD2) from Bos taurus (Bovine).